Consider the following 902-residue polypeptide: Nuclear factor of activated T-cells, cytoplasmic 4 (902 aa).

2 disordered regions span residues 16–180 (VFGE…SSWS) and 208–369 (RFGL…GGSR). A compositionally biased stretch (pro residues) spans 50-81 (EPPPYGAAPIGIPRPPPPRPGMHSPPPRPAPS). Gly residues predominate over residues 96–109 (GGPGGGAGGAGGGR). The segment at 114–119 (PSIRIT) is calcineurin-binding. The span at 151–165 (GFGGYREAGGQGGGA) shows a compositional bias: gly residues. The segment covering 166–180 (FFSPSPGSSSLSSWS) has biased composition (low complexity). A phosphoserine; by MAPK7 and MAPK14 mark is found at S168 and S170. Phosphoserine; by MAPK8 and MAPK9 occurs at positions 213 and 217. The SP 1 repeat unit spans residues 213–229 (SPLPSPRASPRPWTPED). Residues 213 to 293 (SPLPSPRASP…LSRRGSLGEE (81 aa)) are 2 approximate SP repeats. Composition is skewed to pro residues over residues 215 to 227 (LPSP…PWTP) and 254 to 263 (GPTPASPRPA). Residues 268–270 (KRR) carry the Nuclear localization signal motif. The segment covering 272–288 (SSSGTPSSASPALSRRG) has biased composition (low complexity). The stretch at 277–293 (PSSASPALSRRGSLGEE) is one SP 2; approximate repeat. A phosphoserine; by RPS6KA3 mark is found at S289 and S344. Residues 401–582 (SALPPLDWPL…VPIECSQRSA (182 aa)) enclose the RHD domain. The DNA-binding element occupies 430–437 (RAHYETEG). The IPT/TIG domain occupies 586–683 (PQVEAYSPSA…KRSPTQSFRF (98 aa)). Residues 672–674 (RRK) carry the Nuclear localization signal motif. K689 is covalently cross-linked (Glycyl lysine isopeptide (Lys-Gly) (interchain with G-Cter in SUMO2)). The segment at 791–870 (PYGGRGSSFS…GGYSSGFRDS (80 aa)) is disordered. Pro residues predominate over residues 805–824 (FSPPAPFRPPPLPASPPLEG).

In terms of assembly, member of the multicomponent NFATC transcription complex that consists of at least two components, a pre-existing cytoplasmic component NFATC2 and an inducible nuclear component NFATC1. Other NFAT proteins, such as NFATC3, or members of the activating protein-1 (AP-1) family and MAF can also bind the complex. NFAT proteins can bind DNA as monomers or dimers. Component of a promoter-binding complex composed of STAT3, NFATC3 and NFATC4; complex formation is enhanced by calcineurin. Interacts with CREBBP; this interaction potentiates transcription activation. Interacts with MAPK8/JNK1 and MAPK9/JNK2. Interacts with GATA4 (via the second Zn finger). Interacts (via N-terminus) with IRAK1 (via C-terminus). Interacts with RPS6KA3. Interacts with HOMER1, HOMER2 and HOMER3; this interaction competes with calcineurin/PPP3CA-binding and hence prevents NFATC4 dephosphorylation and activation. Interacts with ESR1 and ESR2; this interaction decreases NFATC4 transcriptional activity. Interacts with MTOR and MAPK7/ERK5. Interacts with TRIM17; this interaction prevents NFATC3 nuclear localization. Interacts with TCF25 (via C-terminus); the interaction leads to suppression of NFATC4 transcription factor activity and is reduced following stimulation with angiotensin-2. Phosphorylated by NFATC-kinases; dephosphorylated by calcineurin/PPP3CA. Phosphorylated on Ser-168 and Ser-170 by MTOR, IRAK1, MAPK7/ERK5 and MAPK14/p38, on Ser-213 and Ser-217 by MAPK8/JNK1 and MAPK9/JNK2, and on Ser-289 and Ser-344 by RPS6KA3. Phosphorylated by GSK3B. Phosphorylation by GSK3B markedly increases NFATC4 ubiquitination. Phosphorylation at Ser-168 and Ser-170 is stimulated by UV irradiation. Phosphorylation determines subcellular location: the hyperphosphorylated protein is cytosolic, while the dephosphorylated form is targeted to the nucleus. Post-translationally, ubiquitinated, leading to degradation by the proteasome. Ubiquitination may be stimulated by GSK3B-dependent phosphorylation. Polyubiquitin linkage mainly occurs through 'Lys-48'. Widely expressed, with high levels in placenta, lung, kidney, testis and ovary. Weakly expressed in spleen and thymus. In the hippocampus, expressed in the granular layer of the dentate gyrus, in the pyramidal neurons of CA3 region, and in the hippocampal fissure. Expressed in the heart (at protein level).

The protein localises to the cytoplasm. It localises to the nucleus. Its activity is regulated as follows. Transcriptional activity may be repressed by ESR1 and ESR2. Its function is as follows. Ca(2+)-regulated transcription factor that is involved in several processes, including the development and function of the immune, cardiovascular, musculoskeletal, and nervous systems. Involved in T-cell activation, stimulating the transcription of cytokine genes, including that of IL2 and IL4. Along with NFATC3, involved in embryonic heart development. Following JAK/STAT signaling activation and as part of a complex with NFATC3 and STAT3, binds to the alpha-beta E4 promoter region of CRYAB and activates transcription in cardiomyocytes. Involved in mitochondrial energy metabolism required for cardiac morphogenesis and function. Transactivates many genes involved in the cardiovascular system, including AGTR2, NPPB/BNP (in synergy with GATA4), NPPA/ANP/ANF and MYH7/beta-MHC. Involved in the regulation of adult hippocampal neurogenesis. Involved in BDNF-driven pro-survival signaling in hippocampal adult-born neurons. Involved in the formation of long-term spatial memory and long-term potentiation. In cochlear nucleus neurons, may play a role in deafferentation-induced apoptosis during the developmental critical period, when auditory neurons depend on afferent input for survival. Binds to and activates the BACE1/Beta-secretase 1 promoter, hence may regulate the proteolytic processing of the amyloid precursor protein (APP). Plays a role in adipocyte differentiation. May be involved in myoblast differentiation into myotubes. Binds the consensus DNA sequence 5'-GGAAAAT-3'. In the presence of CREBBP, activates TNF transcription. Binds to PPARG gene promoter and regulates its activity. Binds to PPARG and REG3G gene promoters. This Homo sapiens (Human) protein is Nuclear factor of activated T-cells, cytoplasmic 4 (NFATC4).